Consider the following 878-residue polypeptide: Interleukin-3 receptor class 2 subunit beta (878 aa).

Residues 1–22 (MDQQMALTWGLCYMALVALCWG) form the signal peptide. Residues 23 to 440 (HEVTEEEETV…SNEYTWTTDW (418 aa)) are Extracellular-facing. A disulfide bridge links cysteine 39 with cysteine 49. N-linked (GlcNAc...) asparagine glycosylation occurs at asparagine 62. A disulfide bridge links cysteine 78 with cysteine 95. A Fibronectin type-III 1 domain is found at 139–244 (PPKDIHISPS…PEVHWDSQPG (106 aa)). A disordered region spans residues 223 to 244 (GSSLSGRPSRWSPEVHWDSQPG). Cystine bridges form between cysteine 254–cysteine 264 and cysteine 293–cysteine 310. Residues 343–438 (QMEPPILNQT…EWSNEYTWTT (96 aa)) form the Fibronectin type-III 2 domain. Residue asparagine 350 is glycosylated (N-linked (GlcNAc...) asparagine). The WSXWS motif motif lies at 427–431 (WSEWS). The chain crosses the membrane as a helical span at residues 441–462 (VMPTLWIVLILVFLIFTLLLAL). At 463 to 878 (HFGRVYGYRT…AIQFFKSLKY (416 aa)) the chain is on the cytoplasmic side. A Box 1 motif motif is present at residues 476-484 (WKEKIPNPS). Disordered stretches follow at residues 539 to 620 (LTIE…GGSL) and 660 to 709 (SSLE…MASD). A compositionally biased stretch (polar residues) spans 554-570 (PDTTPAASSESTEQLPN). Basic and acidic residues predominate over residues 671-689 (EPKENPPVELSVEKQEARD). Phosphoserine occurs at positions 752 and 754. Position 765 is a phosphotyrosine (tyrosine 765). 2 disordered regions span residues 771 to 810 (SVSQAATSPPGHPAPPVASSPTVIPGEPREEVGPASPHPE) and 829 to 849 (PGSLSPHSKPPSPSLCSETED).

This sequence belongs to the type I cytokine receptor family. Type 4 subfamily. Heterodimer of an alpha and a beta subunit.

Its subcellular location is the membrane. In mouse, there are two classes of high-affinity IL3 receptors. One contains this IL3-specific beta subunit and the other contains the beta subunit also shared by high-affinity IL5 and GM-CSF receptors. In Mus musculus (Mouse), this protein is Interleukin-3 receptor class 2 subunit beta (Csf2rb2).